We begin with the raw amino-acid sequence, 1406 residues long: Protein FAM135B (1406 aa).

Disordered regions lie at residues 519–548 (WTGQ…DGQA) and 770–820 (SVSA…GDSG). Phosphoserine is present on residues serine 777 and serine 778. Positions 804 to 816 (KSQGSPGSCSQLC) are enriched in polar residues.

This sequence belongs to the FAM135 family.

The sequence is that of Protein FAM135B (FAM135B) from Homo sapiens (Human).